The following is a 325-amino-acid chain: GMP reductase (325 aa).

Catalysis depends on cysteine 174, which acts as the Thioimidate intermediate. 203 to 226 (LIADGGIRTHGDIAKSIRFGASMV) lines the NADP(+) pocket.

The protein belongs to the IMPDH/GMPR family. GuaC type 2 subfamily.

It catalyses the reaction IMP + NH4(+) + NADP(+) = GMP + NADPH + 2 H(+). Functionally, catalyzes the irreversible NADPH-dependent deamination of GMP to IMP. It functions in the conversion of nucleobase, nucleoside and nucleotide derivatives of G to A nucleotides, and in maintaining the intracellular balance of A and G nucleotides. This is GMP reductase from Staphylococcus aureus (strain JH9).